A 445-amino-acid polypeptide reads, in one-letter code: D-serine dehydratase (445 aa).

The residue at position 118 (Lys118) is an N6-(pyridoxal phosphate)lysine.

It belongs to the serine/threonine dehydratase family. DsdA subfamily. As to quaternary structure, monomer. Pyridoxal 5'-phosphate serves as cofactor.

The catalysed reaction is D-serine = pyruvate + NH4(+). The chain is D-serine dehydratase from Serratia proteamaculans (strain 568).